A 590-amino-acid chain; its full sequence is Synaptotagmin-3 (590 aa).

The Vesicular segment spans residues 1 to 54 (MSGDYEDDLCRRALILVSDLCARVRDADTNDRCQEFNDRIRGYPRGPDADISVS). Positions 10–34 (CRRALILVSDLCARVRDADTNDRCQ) are cysteine motif. Residues 55–75 (LLSVIVTFCGIVLLGVSLFVS) form a helical membrane-spanning segment. At 76–590 (WKLCWVPWRD…KGLSEKENSE (515 aa)) the chain is on the cytoplasmic side. Disordered stretches follow at residues 143 to 220 (AELL…VTSL), 234 to 260 (TQQT…LPGG), and 273 to 295 (ELYQ…GEAG). Residues 185–203 (SPELPSEGGAGSGLLLLPP) are compositionally biased toward low complexity. Over residues 234 to 243 (TQQTLTSQPD) the composition is skewed to polar residues. The segment covering 278–295 (TGPGGRRSGGGPGSGEAG) has biased composition (gly residues). Arg284 carries the omega-N-methylarginine modification. 2 consecutive C2 domains span residues 299–420 (PCGR…PLWR) and 431–565 (DLGE…EHWH). Positions 330, 336, 388, 389, 390, 393, 396, 462, 468, 522, and 524 each coordinate Ca(2+).

Belongs to the synaptotagmin family. As to quaternary structure, homodimer; disulfide-linked via the cysteine motif. Can also form heterodimers with SYT6, SYT9 and SYT10. It depends on Ca(2+) as a cofactor. In terms of tissue distribution, expressed in melanocytes.

The protein localises to the cell membrane. It is found in the cytoplasmic vesicle. It localises to the secretory vesicle membrane. Ca(2+) sensor involved in Ca(2+)-dependent exocytosis of secretory vesicles through Ca(2+) and phospholipid binding to the C2 domain. Ca(2+) induces binding of the C2-domains to phospholipid membranes and to assembled SNARE-complexes; both actions contribute to triggering exocytosis. Plays a role in dendrite formation by melanocytes. The sequence is that of Synaptotagmin-3 (SYT3) from Homo sapiens (Human).